The following is a 504-amino-acid chain: L-carnitine/gamma-butyrobetaine antiporter (504 aa).

The next 12 helical transmembrane spans lie at 10-30, 51-71, 92-112, 143-163, 195-215, 231-251, 263-283, 316-336, 347-367, 398-418, 446-466, and 475-495; these read IEPK…WLTV, WGWA…WLVF, IFMM…SIEI, GPLP…FFFV, FYLV…TPLV, LDAI…ACGL, SYLS…SFIM, WTVF…IFLA, LCFG…TVLG, WAAL…CFIA, LLVR…LLAL, and AIIA…LSFI.

The protein belongs to the BCCT transporter (TC 2.A.15) family. CaiT subfamily. Homotrimer.

Its subcellular location is the cell inner membrane. The catalysed reaction is 4-(trimethylamino)butanoate(in) + (R)-carnitine(out) = 4-(trimethylamino)butanoate(out) + (R)-carnitine(in). Its pathway is amine and polyamine metabolism; carnitine metabolism. In terms of biological role, catalyzes the exchange of L-carnitine for gamma-butyrobetaine. In Escherichia coli (strain ATCC 8739 / DSM 1576 / NBRC 3972 / NCIMB 8545 / WDCM 00012 / Crooks), this protein is L-carnitine/gamma-butyrobetaine antiporter.